The chain runs to 208 residues: AN1-type zinc finger protein 6 (208 aa).

The A20-type zinc finger occupies 8 to 42 (SQVPMLCSTGCGFYGNPRTNGMCSVCYKEHLQRQN). Zn(2+) is bound by residues cysteine 14, cysteine 18, cysteine 30, and cysteine 33. The segment covering 41–68 (QNSSNGRISPPATSVSSLSESLPVQCTD) has biased composition (polar residues). Residues 41-140 (QNSSNGRISP…PSEEQSKSLE (100 aa)) form a disordered region. A Phosphoserine modification is found at serine 49. A compositionally biased stretch (low complexity) spans 80–94 (STSSSMQPSPVSNQS). Polar residues-rich tracts occupy residues 95–110 (LLSESVASSQLDSTSV) and 120–133 (VQASVSDTAQQPSE). The segment at 143 to 189 (KQKKNRCFMCRKKVGLTGFECRCGNVYCGVHRYSDVHNCSYNYKADA) adopts an AN1-type zinc-finger fold. Residues cysteine 149, cysteine 152, cysteine 163, cysteine 165, cysteine 170, histidine 173, histidine 179, and cysteine 181 each coordinate Zn(2+). N6-acetyllysine is present on lysine 204.

Interacts with PKN1. Interacts with TRAF2. Interacts with mono- and polyubiquitin. Interacts with PEX6. Interacts with PEX5 (Cys-linked ubiquitinated). In terms of tissue distribution, widely expressed with high level in heart, skeletal muscle, liver, kidney and placenta.

The protein localises to the cytoplasm. Functionally, involved in regulation of TNF-alpha induced NF-kappa-B activation and apoptosis. Involved in modulation of 'Lys-48'-linked polyubiquitination status of TRAF2 and decreases association of TRAF2 with RIPK1. Required for PTS1 target sequence-dependent protein import into peroxisomes and PEX5 stability; may cooperate with PEX6. In vitro involved in PEX5 export from the cytosol to peroxisomes. The sequence is that of AN1-type zinc finger protein 6 (ZFAND6) from Homo sapiens (Human).